A 214-amino-acid polypeptide reads, in one-letter code: Riboflavin kinase (214 aa).

Positions Met1 to Ala91 are H-T-H motif-like. Positions Pro92–Glu214 are riboflavin kinase. CDP is bound at residue Gly101 to Gln106. 2 residues coordinate Mg(2+): Thr130 and Asn132. FMN-binding residues include Thr182 and Glu190. Ile195–Arg198 is a binding site for CDP.

The protein belongs to the archaeal riboflavin kinase family. Requires Mg(2+) as cofactor.

It carries out the reaction riboflavin + CTP = CDP + FMN + H(+). The protein operates within cofactor biosynthesis; FMN biosynthesis; FMN from riboflavin (CTP route): step 1/1. In terms of biological role, catalyzes the CTP-dependent phosphorylation of riboflavin (vitamin B2) to form flavin mononucleotide (FMN). This Methanocella arvoryzae (strain DSM 22066 / NBRC 105507 / MRE50) protein is Riboflavin kinase (ribK).